The chain runs to 423 residues: Osteomodulin (423 aa).

The first 20 residues, 1–20, serve as a signal peptide directing secretion; sequence MGFLSPIYVLFFCFGVRVYC. A sulfotyrosine mark is found at Y22, Y25, Y31, Y39, Y51, and Y77. Residues 53 to 91 enclose the LRRNT domain; it reads VPFYNNILGCAKECFCPTNFPTSMYCDNRKLKTIPIIPM. LRR repeat units follow at residues 92–113, 116–129, 142–164, 165–184, 187–207, 213–233, 234–255, 258–279, 281–294, 301–322, and 331–353; these read HIQQLNLQFNDIEAVTANSFIN, HLKEINLSHNKIKS, NLQQLHLEHNNLEEFPFPLPKSL, ERLLLGYNEISILPTNAMDG, NVTMLDLCYNHLSDSMLKEKT, KLMQLNLCNNRLESMPLGLPS, SLMYLSLENNSISSIPDNYFDK, KLHALRISHNKLEDIPYDIFNL, NLIELNVGHNKLKQ, NLEHLYLQNNEIESINVTMICP, and HLTYLRVDQNKLKEPISSYIFFC. N-linked (GlcNAc...) asparagine glycosylation is found at N113 and N121. An N-linked (GlcNAc...) asparagine glycan is attached at N187. N-linked (GlcNAc...) asparagine glycosylation is found at N242 and N278. N-linked (GlcNAc...) asparagine glycosylation occurs at N316. The cysteines at positions 321 and 353 are disulfide-linked. Positions 381 to 406 are disordered; sequence RSYQEEEEEDDHDSQDNTLEGQEVSD. Sulfotyrosine occurs at positions 413 and 414.

This sequence belongs to the small leucine-rich proteoglycan (SLRP) family. SLRP class II subfamily. As to quaternary structure, binds the alpha(V)beta(3)-integrin. Glycosylated; contains keratan sulfate. As to expression, bone specific.

Its subcellular location is the secreted. It localises to the extracellular space. It is found in the extracellular matrix. May be implicated in biomineralization processes. Has a function in binding of osteoblasts via the alpha(V)beta(3)-integrin. This chain is Osteomodulin (Omd), found in Mus musculus (Mouse).